A 216-amino-acid chain; its full sequence is Soluble inorganic pyrophosphatase 4 (216 aa).

Residue Ser18 is modified to Phosphoserine. Residues Lys66 and Arg80 each coordinate substrate. The active-site Proton donor is the Tyr88. Substrate is bound at residue Tyr92. Mg(2+) is bound by residues Asp102, Asp107, and Asp139. Tyr176 serves as a coordination point for substrate.

Belongs to the PPase family. Monomer. Mg(2+) serves as cofactor. Ubiquitous, excepted in pollen. Very low expression in cork, xylem and hypocotyls.

It localises to the cytoplasm. The catalysed reaction is diphosphate + H2O = 2 phosphate + H(+). Its activity is regulated as follows. Inhibited by Zn(2+), Ca(2+), Ba(2+), Fe(2+), Co(2+), Cu(2+), Eu(2+), Eu(3+) and Mn(2+). Functionally, catalyzes the irreversible hydrolysis of pyrophosphate (PPi) to phosphate. The MgPPi(2-) complex binds to the enzyme only after a free Mg(2+) ion has bound. No activity with glycerol-3-phosphate, glucose-6-phosphate, p-nitrophenylphosphate, ADP, NADP(+), NAD(+),NADH, NADPH or phosphoribosyl pyrophosphate as substrates. The sequence is that of Soluble inorganic pyrophosphatase 4 from Arabidopsis thaliana (Mouse-ear cress).